Here is a 321-residue protein sequence, read N- to C-terminus: Glutaminase (321 aa).

7 residues coordinate substrate: Ser69, Asn120, Glu165, Asn172, Tyr196, Tyr248, and Val266.

This sequence belongs to the glutaminase family. Homotetramer.

The catalysed reaction is L-glutamine + H2O = L-glutamate + NH4(+). The polypeptide is Glutaminase (Bacteroides thetaiotaomicron (strain ATCC 29148 / DSM 2079 / JCM 5827 / CCUG 10774 / NCTC 10582 / VPI-5482 / E50)).